The primary structure comprises 187 residues: Peptidyl-tRNA hydrolase (187 aa).

Tyrosine 14 lines the tRNA pocket. Histidine 19 serves as the catalytic Proton acceptor. Tyrosine 63 and asparagine 65 together coordinate tRNA.

The protein belongs to the PTH family. Monomer.

The protein resides in the cytoplasm. The enzyme catalyses an N-acyl-L-alpha-aminoacyl-tRNA + H2O = an N-acyl-L-amino acid + a tRNA + H(+). In terms of biological role, hydrolyzes ribosome-free peptidyl-tRNAs (with 1 or more amino acids incorporated), which drop off the ribosome during protein synthesis, or as a result of ribosome stalling. Catalyzes the release of premature peptidyl moieties from peptidyl-tRNA molecules trapped in stalled 50S ribosomal subunits, and thus maintains levels of free tRNAs and 50S ribosomes. The protein is Peptidyl-tRNA hydrolase of Thermodesulfovibrio yellowstonii (strain ATCC 51303 / DSM 11347 / YP87).